Consider the following 240-residue polypeptide: tRNA (guanine-N(1)-)-methyltransferase (240 aa).

S-adenosyl-L-methionine is bound by residues Gly-110 and Ile-130–Leu-135.

This sequence belongs to the RNA methyltransferase TrmD family. As to quaternary structure, homodimer.

It localises to the cytoplasm. It catalyses the reaction guanosine(37) in tRNA + S-adenosyl-L-methionine = N(1)-methylguanosine(37) in tRNA + S-adenosyl-L-homocysteine + H(+). Specifically methylates guanosine-37 in various tRNAs. This chain is tRNA (guanine-N(1)-)-methyltransferase, found in Macrococcus caseolyticus (strain JCSC5402) (Macrococcoides caseolyticum).